Here is a 279-residue protein sequence, read N- to C-terminus: MSSAIESWADAGDEFSVPADIIQNPDGTKTVITFRTNQDGKKVKITQKIKEVIVREKVHPLIAQRKNWAKYGKEKHSSPGPDTSTTQLGEKVDLKLGLSWKQVEKKEEEDKAQERASRVVVQTIKCRVCGGDHYTAKCPFKDTLGASTLNGGTPEPGSEGAGDADAVTSTGRYIPRHLRPDANGNIPTREARDDSTTLKVSQLNTFVDEDMLRNELFARFGPLQRVTVVRDRETGESRGFAYVSFATEEIAQKALDLLNGKGYHSLILHLEWSKKKKPL.

2 disordered regions span residues 69-90 (AKYGKEKHSSPGPDTSTTQLGE) and 149-193 (LNGG…EARD). Ser-77 carries the post-translational modification Phosphoserine. The 80-residue stretch at 196–275 (TTLKVSQLNT…LILHLEWSKK (80 aa)) folds into the RRM domain.

Belongs to the eIF-3 subunit G family. In terms of assembly, component of the eukaryotic translation initiation factor 3 (eIF-3) complex.

Its subcellular location is the cytoplasm. Its function is as follows. RNA-binding component of the eukaryotic translation initiation factor 3 (eIF-3) complex, which is involved in protein synthesis of a specialized repertoire of mRNAs and, together with other initiation factors, stimulates binding of mRNA and methionyl-tRNAi to the 40S ribosome. The eIF-3 complex specifically targets and initiates translation of a subset of mRNAs involved in cell proliferation. This subunit can bind 18S rRNA. The sequence is that of Eukaryotic translation initiation factor 3 subunit G from Lodderomyces elongisporus (strain ATCC 11503 / CBS 2605 / JCM 1781 / NBRC 1676 / NRRL YB-4239) (Yeast).